We begin with the raw amino-acid sequence, 274 residues long: Penicillin-insensitive murein endopeptidase (274 aa).

A signal peptide spans 1 to 19 (MKKTAIALLAWFVSSASLA). 3 disulfide bridges follow: Cys-44-Cys-265, Cys-187-Cys-235, and Cys-216-Cys-223. 6 residues coordinate Zn(2+): His-110, His-113, Asp-120, Asp-147, His-150, and His-211. Residues 225-274 (DQPLPPPGDGCGAELQSWFEPPKLGTTKPEKKTPPPLPPSCQALLDEHVL) are disordered.

The protein belongs to the peptidase M74 family. In terms of assembly, dimer. Zn(2+) serves as cofactor.

It localises to the periplasm. Its function is as follows. Murein endopeptidase that cleaves the D-alanyl-meso-2,6-diamino-pimelyl amide bond that connects peptidoglycan strands. Likely plays a role in the removal of murein from the sacculus. This chain is Penicillin-insensitive murein endopeptidase, found in Salmonella paratyphi B (strain ATCC BAA-1250 / SPB7).